The following is a 219-amino-acid chain: Mucosal pentraxin (219 aa).

The signal sequence occupies residues 1 to 19; the sequence is MEKLIVGILFLSVLSGSVA. The region spanning 24–219 is the Pentraxin (PTX) domain; sequence KGKAFIFPQE…YVVIKPKLWP (196 aa). Asn51 carries an N-linked (GlcNAc...) asparagine glycan. Cys55 and Cys114 are joined by a disulfide. Asp77, Asn78, Glu155, Gln156, Asp157, and Gln167 together coordinate Ca(2+).

This sequence belongs to the pentraxin family. Homopentamer. Pentraxin (or pentaxin) have a discoid arrangement of 5 non-covalently bound subunits. It depends on Ca(2+) as a cofactor. In terms of tissue distribution, expressed in colon.

The protein localises to the secreted. This chain is Mucosal pentraxin (Mptx1), found in Mus musculus (Mouse).